The sequence spans 78 residues: uncharacterized protein (78 aa).

Positions 51–78 (GGKWDGGGSGGKWNGGGGSGGGSWKKWN) are disordered.

This is an uncharacterized protein from Dictyostelium discoideum (Social amoeba).